The sequence spans 240 residues: Superoxide dismutase [Cu-Zn] (240 aa).

The N-terminal stretch at 1 to 32 is a signal peptide; that stretch reads MPKPADHRNHAAVSTSVLSALFLGAGAALLSA. Residue cysteine 33 is the site of N-palmitoyl cysteine attachment. A lipid anchor (S-diacylglycerol cysteine) is attached at cysteine 33. Polar residues-rich tracts occupy residues 36–51 and 68–77; these read PQHASTVPGTTPSIWT and GAQSLTSTLT. The disordered stretch occupies residues 36–77; sequence PQHASTVPGTTPSIWTGSPAPSGLSGHDEESPGAQSLTSTLT. The Cu cation site is built by histidine 116 and histidine 118. A disulfide bond links cysteine 123 and cysteine 234. Zn(2+) is bound by residues histidine 146 and aspartate 158. Histidine 195 contributes to the Cu cation binding site.

This sequence belongs to the Cu-Zn superoxide dismutase family. The cofactor is Cu cation. Zn(2+) is required as a cofactor.

It localises to the cell membrane. The catalysed reaction is 2 superoxide + 2 H(+) = H2O2 + O2. Its activity is regulated as follows. Inhibited by the copper chelator diethyl dithiocarbamate. Its function is as follows. Destroys radicals which are normally produced within the cells and which are toxic to biological systems. May play a role in favoring mycobacterial survival in phagocytes. The polypeptide is Superoxide dismutase [Cu-Zn] (sodC) (Mycobacterium bovis (strain ATCC BAA-935 / AF2122/97)).